We begin with the raw amino-acid sequence, 346 residues long: MSGEDDFYLFQNISSVGPWDGPQYHLAPVWAFRLQAAFMGFVFFVGTPLNAIVLVATLHYKKLRQPLNYILVNVSLGGFLFCIFSVFTVFIASCHGYFLFGRHVCALEAFLGSVAGLVTGWSLAFLAFERYVVICKPFGSIRFNSKHALMVVLATWIIGIGVSIPPFFGWSRFIPEGLQCSCGPDWYTVGTKYRSEYYTWFLFIFCFIIPLSLICFSYSQLLRTLRAVAAQQQESATTQKAEREVSHMVVVMVGSFCLCYVPYAALAMYMVNNRNHGLDLRLVTIPAFFSKSSCVYNPIIYCFMNKQFRACILEMVCRKPMADESDVSGSQKTEVSTVSSSKVGPH.

Residues 1-31 (MSGEDDFYLFQNISSVGPWDGPQYHLAPVWA) lie on the Extracellular side of the membrane. Asparagine 12 carries N-linked (GlcNAc...) asparagine glycosylation. A helical transmembrane segment spans residues 32-56 (FRLQAAFMGFVFFVGTPLNAIVLVA). Residues 57 to 68 (TLHYKKLRQPLN) are Cytoplasmic-facing. Residues 69–94 (YILVNVSLGGFLFCIFSVFTVFIASC) traverse the membrane as a helical segment. The Extracellular segment spans residues 95 to 108 (HGYFLFGRHVCALE). Cysteines 105 and 182 form a disulfide. Residues 109-128 (AFLGSVAGLVTGWSLAFLAF) traverse the membrane as a helical segment. Residues 129 to 147 (ERYVVICKPFGSIRFNSKH) lie on the Cytoplasmic side of the membrane. The helical transmembrane segment at 148–171 (ALMVVLATWIIGIGVSIPPFFGWS) threads the bilayer. At 172–197 (RFIPEGLQCSCGPDWYTVGTKYRSEY) the chain is on the extracellular side. The chain crosses the membrane as a helical span at residues 198–225 (YTWFLFIFCFIIPLSLICFSYSQLLRTL). Topologically, residues 226–247 (RAVAAQQQESATTQKAEREVSH) are cytoplasmic. A helical membrane pass occupies residues 248–271 (MVVVMVGSFCLCYVPYAALAMYMV). Topologically, residues 272-279 (NNRNHGLD) are extracellular. Residues 280 to 304 (LRLVTIPAFFSKSSCVYNPIIYCFM) form a helical membrane-spanning segment. An N6-(retinylidene)lysine modification is found at lysine 291. Topologically, residues 305–346 (NKQFRACILEMVCRKPMADESDVSGSQKTEVSTVSSSKVGPH) are cytoplasmic. Positions 324–346 (ESDVSGSQKTEVSTVSSSKVGPH) are disordered. Residues 330-346 (SQKTEVSTVSSSKVGPH) show a composition bias toward low complexity.

The protein belongs to the G-protein coupled receptor 1 family. Opsin subfamily. In terms of processing, phosphorylated on some or all of the serine and threonine residues present in the C-terminal region. Expressed in the inner and outer segments of cone photoreceptor cells in the retina (at protein level).

The protein resides in the cell membrane. It is found in the photoreceptor inner segment. Its subcellular location is the cell projection. It localises to the cilium. The protein localises to the photoreceptor outer segment. The protein resides in the cytoplasm. It is found in the perinuclear region. Visual pigments are the light-absorbing molecules that mediate vision. They consist of an apoprotein, opsin, covalently linked to cis-retinal. Required for the maintenance of cone outer segment organization in the ventral retina, but not essential for the maintenance of functioning cone photoreceptors. Involved in ensuring correct abundance and localization of retinal membrane proteins. May increase spectral sensitivity in dim light. The sequence is that of Short-wave-sensitive opsin 1 (Opn1sw) from Mus musculus (Mouse).